Consider the following 599-residue polypeptide: ATP-dependent rRNA helicase SPB4 (599 aa).

The Q motif motif lies at 7 to 35 (WDTLDYTLQPWIRTAVDAMGYETMTPVQA). The 187-residue stretch at 38–224 (IPLFARNKDV…KTGMRNPVKV (187 aa)) folds into the Helicase ATP-binding domain. 51–58 (SVTGSGKT) contacts ATP. The DEAD box signature appears at 172 to 175 (DEAD). The 168-residue stretch at 248-415 (KLQLLLTLLN…GLPEIIRAWI (168 aa)) folds into the Helicase C-terminal domain. The stretch at 501–561 (QREKARKLAK…LKRKAIEEKL (61 aa)) forms a coiled coil. Residues 559–599 (EKLIENSDDSDNEVETDWKDIVRQRKKKKTNSGMQGDFGDL) are disordered. Over residues 564–573 (NSDDSDNEVE) the composition is skewed to acidic residues.

This sequence belongs to the DEAD box helicase family. DDX55/SPB4 subfamily. As to quaternary structure, component of pre-60S ribosomal complexes.

The protein resides in the nucleus. It is found in the nucleolus. It catalyses the reaction ATP + H2O = ADP + phosphate + H(+). ATP-binding RNA helicase involved in the biogenesis of 60S ribosomal subunits. Binds 90S pre-ribosomal particles and dissociates from pre-60S ribosomal particles after processing of 27SB pre-rRNA. Required for the normal formation of 18S rRNA through the processing of pre-rRNAs at sites A0, A1 and A2, and the normal formation of 25S and 5.8S rRNAs through the processing of pre-rRNAs at sites C1 and C2. This chain is ATP-dependent rRNA helicase SPB4, found in Eremothecium gossypii (strain ATCC 10895 / CBS 109.51 / FGSC 9923 / NRRL Y-1056) (Yeast).